Consider the following 373-residue polypeptide: tRNA-specific 2-thiouridylase MnmA (373 aa).

Residues 12-19 (GMSGGVDS) and methionine 38 contribute to the ATP site. The segment at 98–100 (NPD) is interaction with target base in tRNA. Cysteine 103 acts as the Nucleophile in catalysis. An intrachain disulfide couples cysteine 103 to cysteine 200. Glycine 127 provides a ligand contact to ATP. The segment at 150–152 (KDQ) is interaction with tRNA. Cysteine 200 functions as the Cysteine persulfide intermediate in the catalytic mechanism. Residues 312–313 (RY) are interaction with tRNA.

This sequence belongs to the MnmA/TRMU family.

Its subcellular location is the cytoplasm. It carries out the reaction S-sulfanyl-L-cysteinyl-[protein] + uridine(34) in tRNA + AH2 + ATP = 2-thiouridine(34) in tRNA + L-cysteinyl-[protein] + A + AMP + diphosphate + H(+). Catalyzes the 2-thiolation of uridine at the wobble position (U34) of tRNA, leading to the formation of s(2)U34. The sequence is that of tRNA-specific 2-thiouridylase MnmA from Streptococcus pyogenes serotype M49 (strain NZ131).